We begin with the raw amino-acid sequence, 311 residues long: Cathepsin B (311 aa).

Positions 1–19 (MRVLLSLVVILFIINSAFA) are cleaved as a signal peptide. The propeptide occupies 20–78 (VKINIGRPTKSHKTIHHETWVEEQTDQFDNIKVGQLLGFKRSPNRPKLQIKSYDPLGVQ). N-linked (GlcNAc...) asparagine glycosylation occurs at Asn-91. Disulfide bonds link Cys-92/Cys-121, Cys-104/Cys-145, Cys-138/Cys-191, Cys-167/Cys-195, and Cys-175/Cys-182. The active site involves Cys-107. A glycan (N-linked (GlcNAc...) asparagine) is linked at Asn-198. Catalysis depends on residues His-261 and Asn-281. A glycan (N-linked (GlcNAc...) asparagine) is linked at Asn-290.

Belongs to the peptidase C1 family.

Its subcellular location is the lysosome. The enzyme catalyses Hydrolysis of proteins with broad specificity for peptide bonds. Preferentially cleaves -Arg-Arg-|-Xaa bonds in small molecule substrates (thus differing from cathepsin L). In addition to being an endopeptidase, shows peptidyl-dipeptidase activity, liberating C-terminal dipeptides.. Functionally, thiol protease which is believed to participate in intracellular degradation and turnover of proteins. The chain is Cathepsin B (ctsB) from Dictyostelium discoideum (Social amoeba).